Reading from the N-terminus, the 253-residue chain is LexA repressor (253 aa).

Residues 26–46 (FDEMKDALNLRSKSGIHRLIS) constitute a DNA-binding region (H-T-H motif). Residues 73 to 97 (MPAATGKPPLAESGPPPVTAPATDE) are disordered. Residues Ser174 and Lys212 each act as for autocatalytic cleavage activity in the active site.

The protein belongs to the peptidase S24 family. As to quaternary structure, homodimer.

It catalyses the reaction Hydrolysis of Ala-|-Gly bond in repressor LexA.. Represses a number of genes involved in the response to DNA damage (SOS response), including recA and lexA. In the presence of single-stranded DNA, RecA interacts with LexA causing an autocatalytic cleavage which disrupts the DNA-binding part of LexA, leading to derepression of the SOS regulon and eventually DNA repair. This Gluconacetobacter diazotrophicus (strain ATCC 49037 / DSM 5601 / CCUG 37298 / CIP 103539 / LMG 7603 / PAl5) protein is LexA repressor.